Here is a 178-residue protein sequence, read N- to C-terminus: MVLLLVLGLVLSLATAQFNLHTAVRRDYNLARISGTWYLDSIASDNMTRIEENGDLRLFIRNIKLLNNGSLQFDFHFMLQGECVAVTMVCEKTKNNGEFSVAYEGKNKVLLLETDYSMYIIFYMQNIKNGTKTQVLALYGRSILLDKTHQREFENICNLYGLDSQNIIDMTKKDFCFL.

A signal peptide spans 1-16 (MVLLLVLGLVLSLATA). N-linked (GlcNAc...) asparagine glycans are attached at residues Asn46, Asn68, and Asn129. Cys83 and Cys176 are joined by a disulfide.

The protein belongs to the calycin superfamily. Lipocalin family. As to expression, expressed in epididymis. Not detected in all other tissues tested.

Its subcellular location is the secreted. This is Epididymal-specific lipocalin-9 (Lcn9) from Mus musculus (Mouse).